The sequence spans 191 residues: Orotate phosphoribosyltransferase (191 aa).

Glu-116–Ser-124 contributes to the 5-phospho-alpha-D-ribose 1-diphosphate binding site. Residues Thr-120 and Arg-148 each contribute to the orotate site.

This sequence belongs to the purine/pyrimidine phosphoribosyltransferase family. PyrE subfamily. Homodimer. It depends on Mg(2+) as a cofactor.

The catalysed reaction is orotidine 5'-phosphate + diphosphate = orotate + 5-phospho-alpha-D-ribose 1-diphosphate. Its pathway is pyrimidine metabolism; UMP biosynthesis via de novo pathway; UMP from orotate: step 1/2. In terms of biological role, catalyzes the transfer of a ribosyl phosphate group from 5-phosphoribose 1-diphosphate to orotate, leading to the formation of orotidine monophosphate (OMP). This Heliobacterium modesticaldum (strain ATCC 51547 / Ice1) protein is Orotate phosphoribosyltransferase.